The chain runs to 529 residues: 3-ketoacyl-CoA synthase 20 (529 aa).

A disordered region spans residues 1–22 (MSHNQNQPHRPVPVHVTNAEPN). 2 helical membrane passes run 52–72 (LYIL…SFTI) and 84–104 (FHFL…TAYF). Positions 103–396 (YFTTRPRRVF…FFATLVARKV (294 aa)) constitute an FAE domain. Residues Cys247, His326, His415, His419, and Asn452 contribute to the active site.

Belongs to the thiolase-like superfamily. Chalcone/stilbene synthases family. Expressed in aerial organs. Expressed in leaves, flowers, siliques and stems. Expressed in roots, young seedlings, leaves, flowers and siliques.

Its subcellular location is the membrane. The enzyme catalyses a very-long-chain acyl-CoA + malonyl-CoA + H(+) = a very-long-chain 3-oxoacyl-CoA + CO2 + CoA. Its pathway is lipid metabolism; fatty acid biosynthesis. Its activity is regulated as follows. Inhibited by K3 herbicides such as alachlor, allidochlor, anilofos, cafenstrole, fentrazamide and flufenacet. Strongly inhibited by metazachlor and only slightly by mefluidide. Functionally, mediates the synthesis of VLCFAs from 22 to 26 carbons in length (e.g. C22, C24, C26). Functionally redundant with KCS2 in the two-carbon elongation of C22 fatty acids that is required for cuticular wax and root suberin biosynthesis. The polypeptide is 3-ketoacyl-CoA synthase 20 (Arabidopsis thaliana (Mouse-ear cress)).